The following is a 347-amino-acid chain: MTISVAIAGATGYAGSEILRLLLSHPAYLSGDLRIGALTGHSNAGQRVSELMPHLPQLADRVIEDTTPEVLAGHDIVFLGLPHGHSADIGRQLGESVTVIDCAADFRLRSKEDWDAFYGGEYAGSWPYGIPEVPGNRDKLKGSNRVAVPGCFPTTITLGALPAVAKGLIEPDLSVIAITGVSGAGKKASVAQLGAETMGNLKAYKPGGTHRHTPEVLQNLQPFTQDSVSVSFTPVLAPLPRGILATITAPLKGDVDKHSVAQAFRDFYAEEPFCLVLPEDQQPETQNVVGTNMVHIQAHVDERTQRLVITAALDNLCKGTAGAAVQCMNLTLGWEETSGLPQAAVAP.

Cys151 is a catalytic residue.

The protein belongs to the NAGSA dehydrogenase family. Type 1 subfamily.

Its subcellular location is the cytoplasm. It catalyses the reaction N-acetyl-L-glutamate 5-semialdehyde + phosphate + NADP(+) = N-acetyl-L-glutamyl 5-phosphate + NADPH + H(+). It functions in the pathway amino-acid biosynthesis; L-arginine biosynthesis; N(2)-acetyl-L-ornithine from L-glutamate: step 3/4. Its function is as follows. Catalyzes the NADPH-dependent reduction of N-acetyl-5-glutamyl phosphate to yield N-acetyl-L-glutamate 5-semialdehyde. This is N-acetyl-gamma-glutamyl-phosphate reductase from Corynebacterium aurimucosum (strain ATCC 700975 / DSM 44827 / CIP 107346 / CN-1) (Corynebacterium nigricans).